A 439-amino-acid polypeptide reads, in one-letter code: Cobyrinate a,c-diamide synthase (439 aa).

The interval 214–235 (ETARAPPEVATTERNTGDSPAD) is disordered. The 192-residue stretch at 237–428 (RVAVAQDSAF…CHCHGESGAF (192 aa)) folds into the GATase cobBQ-type domain. Catalysis depends on Cys317, which acts as the Nucleophile.

It belongs to the CobB/CbiA family. It depends on Mg(2+) as a cofactor.

The enzyme catalyses cob(II)yrinate + 2 L-glutamine + 2 ATP + 2 H2O = cob(II)yrinate a,c diamide + 2 L-glutamate + 2 ADP + 2 phosphate + 2 H(+). It functions in the pathway cofactor biosynthesis; adenosylcobalamin biosynthesis; cob(II)yrinate a,c-diamide from sirohydrochlorin (anaerobic route): step 10/10. Catalyzes the ATP-dependent amidation of the two carboxylate groups at positions a and c of cobyrinate, using either L-glutamine or ammonia as the nitrogen source. The polypeptide is Cobyrinate a,c-diamide synthase (Haloarcula marismortui (strain ATCC 43049 / DSM 3752 / JCM 8966 / VKM B-1809) (Halobacterium marismortui)).